The primary structure comprises 535 residues: Alcohol O-acetyltransferase 2 (535 aa).

Residues 19–36 (GHARRMGHLENYFAVLSR) form a membrane association region. Catalysis depends on charge relay system residues H189 and D193. The membrane association stretch occupies residues 515-532 (RGEWESFCKLFYQTIGEF).

It belongs to the ATF1 alcohol acetyltransferase family.

It localises to the lipid droplet. The protein resides in the endoplasmic reticulum membrane. It carries out the reaction an aliphatic alcohol + acetyl-CoA = an acetyl ester + CoA. Functionally, can use acetyl-CoA to synthesize acetate esters from various alcohols, producing ethyl acetate, isoamyl acetate, isobutyl acetate, butyl acetate, hexyl acetate, heptyl acetate and octyl acetate. ATF2 seems to play only a minor role in the acetate ester synthesis, compared to ATF1. Plays an active role in the detoxification hydroxysteroids and possibly certain phytochemicals, in association with the efflux pumps PDR5 and SNQ2. The chain is Alcohol O-acetyltransferase 2 from Saccharomyces cerevisiae (strain ATCC 204508 / S288c) (Baker's yeast).